Consider the following 72-residue polypeptide: Protein SlyX (72 aa).

A disordered region spans residues Lys-53–Tyr-72.

The protein belongs to the SlyX family.

This is Protein SlyX from Proteus mirabilis (strain HI4320).